Consider the following 339-residue polypeptide: tRNA (cytidine(56)-2'-O)-methyltransferase (339 aa).

S-adenosyl-L-methionine is bound by residues Leu79 and 105–109 (GSEKV). The 108-residue stretch at 188–295 (LIEHVKAVEG…VAQADNLFAG (108 aa)) folds into the HD domain.

It belongs to the aTrm56 family. In terms of assembly, homodimer.

Its subcellular location is the cytoplasm. It catalyses the reaction cytidine(56) in tRNA + S-adenosyl-L-methionine = 2'-O-methylcytidine(56) in tRNA + S-adenosyl-L-homocysteine + H(+). Functionally, specifically catalyzes the AdoMet-dependent 2'-O-ribose methylation of cytidine at position 56 in tRNAs. The protein is tRNA (cytidine(56)-2'-O)-methyltransferase of Thermoplasma acidophilum (strain ATCC 25905 / DSM 1728 / JCM 9062 / NBRC 15155 / AMRC-C165).